The primary structure comprises 120 residues: Ribosome-binding factor A (120 aa).

This sequence belongs to the RbfA family. In terms of assembly, monomer. Binds 30S ribosomal subunits, but not 50S ribosomal subunits or 70S ribosomes.

The protein localises to the cytoplasm. In terms of biological role, one of several proteins that assist in the late maturation steps of the functional core of the 30S ribosomal subunit. Associates with free 30S ribosomal subunits (but not with 30S subunits that are part of 70S ribosomes or polysomes). Required for efficient processing of 16S rRNA. May interact with the 5'-terminal helix region of 16S rRNA. In Clostridium botulinum (strain Loch Maree / Type A3), this protein is Ribosome-binding factor A.